Consider the following 961-residue polypeptide: Copper-exporting P-type ATPase (961 aa).

HMA domains are found at residues 3–64 and 69–130; these read QTTL…YQAT and PDVE…YHAT. 4 residues coordinate Cu(+): C14, C17, C80, and C83. 2 disordered regions span residues 131–153 and 178–201; these read QQGI…PESL and VLPT…TASA. The span at 142–151 shows a compositional bias: polar residues; the sequence is LTHSAQSQPE. The HMA 3 domain occupies 226-289; the sequence is ESVQLLLTGM…AVKNAGYGAE (64 aa). Positions 237 and 240 each coordinate Cu(+). Helical transmembrane passes span 316–336, 345–365, 381–401, 565–585, and 592–612; these read AALG…GGSM, PWLI…GHFY, TLVA…NIWP, AVFV…WYFF, and VYTL…ALGL. Residue D650 is the 4-aspartylphosphate intermediate of the active site. Residues D847 and D851 each contribute to the Mg(2+) site. Transmembrane regions (helical) follow at residues 860–880, 906–926, and 928–948; these read VGIA…ITLM, LGAF…LYPF, and GTLL…ITVV.

This sequence belongs to the cation transport ATPase (P-type) (TC 3.A.3) family. Type IB subfamily.

The protein resides in the cell membrane. It catalyses the reaction Cu(+)(in) + ATP + H2O = Cu(+)(out) + ADP + phosphate + H(+). Involved in copper export. This is Copper-exporting P-type ATPase (copA) from Yersinia pestis.